The primary structure comprises 283 residues: ATP synthase gamma chain (283 aa).

Belongs to the ATPase gamma chain family. F-type ATPases have 2 components, CF(1) - the catalytic core - and CF(0) - the membrane proton channel. CF(1) has five subunits: alpha(3), beta(3), gamma(1), delta(1), epsilon(1). CF(0) has three main subunits: a, b and c.

It is found in the cell membrane. Functionally, produces ATP from ADP in the presence of a proton gradient across the membrane. The gamma chain is believed to be important in regulating ATPase activity and the flow of protons through the CF(0) complex. This is ATP synthase gamma chain from Clostridium perfringens (strain ATCC 13124 / DSM 756 / JCM 1290 / NCIMB 6125 / NCTC 8237 / Type A).